The primary structure comprises 150 residues: Lipoprotein signal peptidase (150 aa).

3 helical membrane-spanning segments follow: residues 5–25 (LSLV…NWIV), 59–79 (QQWF…WFLW), and 83–103 (AQNW…GNFI). Residues Asp113 and Asp129 contribute to the active site. The chain crosses the membrane as a helical span at residues 124 to 144 (IFNIADILLSVGFVLLFIAIL).

Belongs to the peptidase A8 family.

The protein localises to the cell membrane. The enzyme catalyses Release of signal peptides from bacterial membrane prolipoproteins. Hydrolyzes -Xaa-Yaa-Zaa-|-(S,diacylglyceryl)Cys-, in which Xaa is hydrophobic (preferably Leu), and Yaa (Ala or Ser) and Zaa (Gly or Ala) have small, neutral side chains.. It functions in the pathway protein modification; lipoprotein biosynthesis (signal peptide cleavage). This protein specifically catalyzes the removal of signal peptides from prolipoproteins. This chain is Lipoprotein signal peptidase, found in Lactococcus lactis subsp. lactis (strain IL1403) (Streptococcus lactis).